A 1127-amino-acid polypeptide reads, in one-letter code: WD repeat and HMG-box DNA-binding protein 1 (1127 aa).

WD repeat units follow at residues 11–50 (GHPE…DPKS), 52–91 (SIGE…GILT), 92–131 (RFTT…QQKT), 134–173 (GHSA…CEAV), 184–223 (FNAK…NICT), 228–267 (FITQ…CLER), and 271–310 (EKGY…DVKQ). Disordered stretches follow at residues 811 to 1013 (AAEQ…AENK) and 1064 to 1127 (KAKG…FKKE). The span at 819 to 829 (QNEEEDEEEED) shows a compositional bias: acidic residues. Positions 846–857 (GDSRAKPVKQDQ) are enriched in basic and acidic residues. Positions 858 to 877 (YEENNEEEMEEEEKEQEEAL) are enriched in acidic residues. Composition is skewed to polar residues over residues 881–891 (TPTANPFNKSV) and 918–937 (SASQ…TSIL). Residues 948-960 (SASGSPSTSKSDS) show a composition bias toward low complexity. Residues 1013-1076 (KKPKTGFQLW…GDYPGEDGAD (64 aa)) constitute a DNA-binding region (HMG box). Polar residues predominate over residues 1087-1100 (NMASNGCPQENTDS).

Homodimer. Found in oocytes and in various other cells.

Its subcellular location is the nucleus. It localises to the nucleoplasm. The protein resides in the cytoplasm. Core replisome component that acts as a replication initiation factor. Binds directly to the CMG complex and functions as a hub to recruit additional proteins to the replication fork. This is WD repeat and HMG-box DNA-binding protein 1 (wdhd1) from Xenopus laevis (African clawed frog).